The chain runs to 373 residues: 1-deoxy-D-xylulose 5-phosphate reductoisomerase (373 aa).

T10, G11, S12, I13, R37, and N112 together coordinate NADPH. K113 contacts 1-deoxy-D-xylulose 5-phosphate. E114 is a binding site for NADPH. Residue D134 coordinates Mn(2+). 1-deoxy-D-xylulose 5-phosphate is bound by residues S135, E136, S160, and H183. A Mn(2+)-binding site is contributed by E136. G189 serves as a coordination point for NADPH. The 1-deoxy-D-xylulose 5-phosphate site is built by S196, N201, K202, and E205. E205 contributes to the Mn(2+) binding site.

It belongs to the DXR family. The cofactor is Mg(2+). It depends on Mn(2+) as a cofactor.

It carries out the reaction 2-C-methyl-D-erythritol 4-phosphate + NADP(+) = 1-deoxy-D-xylulose 5-phosphate + NADPH + H(+). The protein operates within isoprenoid biosynthesis; isopentenyl diphosphate biosynthesis via DXP pathway; isopentenyl diphosphate from 1-deoxy-D-xylulose 5-phosphate: step 1/6. Its function is as follows. Catalyzes the NADPH-dependent rearrangement and reduction of 1-deoxy-D-xylulose-5-phosphate (DXP) to 2-C-methyl-D-erythritol 4-phosphate (MEP). This chain is 1-deoxy-D-xylulose 5-phosphate reductoisomerase, found in Persephonella marina (strain DSM 14350 / EX-H1).